The primary structure comprises 73 residues: Toxin Td7 (73 aa).

The first 7 residues, 1–7 (IGMAVEC), serve as a signal peptide directing secretion. The LCN-type CS-alpha/beta domain occupies 8–70 (KDGYLVGADG…VWDSATNRCG (63 aa)). Intrachain disulfides connect cysteine 18–cysteine 69, cysteine 22–cysteine 44, cysteine 30–cysteine 50, and cysteine 34–cysteine 52. Residue lysine 71 is modified to Lysine amide.

The protein belongs to the long (4 C-C) scorpion toxin superfamily. Sodium channel inhibitor family. Beta subfamily. In terms of tissue distribution, expressed by the venom gland.

Its subcellular location is the secreted. In terms of biological role, beta toxins bind voltage-independently at site-4 of sodium channels (Nav) and shift the voltage of activation toward more negative potentials thereby affecting sodium channel activation and promoting spontaneous and repetitive firing. This Tityus discrepans (Venezuelan scorpion) protein is Toxin Td7.